Here is a 214-residue protein sequence, read N- to C-terminus: MSFEKYKTIIQKYNQIFNLTRLDSDDKIYQNFFLDSLAPYKELDFFTQNTNLKLIDIGSGSGIPGVVLKIIFKNLNLTLLEANQKRCEFLKILTQELGLNDVLIWNMRAEDLTQSMRESFDIATSRAVASLDKILEISAAFVKVNGYLIQPKSIKFYEEELKAKNIIKTLYLERIALKDFWENDYHHLVGVYLKKQITPLQFPRPWNLILKKPL.

S-adenosyl-L-methionine is bound by residues Gly-58, 109–110 (AE), and Arg-126.

Belongs to the methyltransferase superfamily. RNA methyltransferase RsmG family.

It localises to the cytoplasm. Functionally, specifically methylates the N7 position of a guanine in 16S rRNA. The sequence is that of Ribosomal RNA small subunit methyltransferase G from Ureaplasma parvum serovar 3 (strain ATCC 700970).